The chain runs to 333 residues: Ferrochelatase (333 aa).

Fe cation is bound by residues His202 and Glu284.

It belongs to the ferrochelatase family.

It localises to the cytoplasm. It carries out the reaction heme b + 2 H(+) = protoporphyrin IX + Fe(2+). It functions in the pathway porphyrin-containing compound metabolism; protoheme biosynthesis; protoheme from protoporphyrin-IX: step 1/1. Functionally, catalyzes the ferrous insertion into protoporphyrin IX. This is Ferrochelatase from Francisella tularensis subsp. mediasiatica (strain FSC147).